The sequence spans 1578 residues: Formin-2 (1578 aa).

Composition is skewed to basic and acidic residues over residues Met-1 to His-17, Ala-26 to Lys-35, and Thr-57 to Ser-66. Positions Met-1–Asn-73 are disordered. Ser-89 is subject to Phosphoserine. 3 disordered regions span residues Lys-208 to Ala-230, Glu-244 to Arg-383, and Arg-401 to Arg-458. Polar residues-rich tracts occupy residues Ser-273–Thr-282 and Ser-290–Ala-300. Over residues Asp-322 to Glu-333 the composition is skewed to acidic residues. The span at Ala-351–Arg-364 shows a compositional bias: basic and acidic residues. 2 stretches are compositionally biased toward low complexity: residues Ser-404–Pro-418 and Ser-427–Pro-442. A phosphoserine mark is found at Ser-459, Ser-489, and Ser-493. The segment at Ser-587–Ser-634 is disordered. Residues Leu-608 to Pro-622 are compositionally biased toward basic and acidic residues. The stretch at Asp-643–Arg-683 forms a coiled coil. 3 disordered regions span residues Arg-714 to Gln-765, Asp-786 to Cys-836, and Pro-880 to Ser-944. The FH1 domain maps to Pro-735–Pro-1124. Residues Asp-786 to Gln-795 show a composition bias toward polar residues. Residues Leu-803 to His-817 are compositionally biased toward low complexity. Residues Thr-818–Ser-827 are compositionally biased toward basic and acidic residues. Residues Leu-893 to Ser-944 show a composition bias toward pro residues. Tandem repeats lie at residues Met-919–Gly-929, Met-930–Gly-940, Met-941–Gly-951, Met-952–Gly-962, Val-963–Gly-973, Val-974–Gly-984, Val-985–Gly-995, Val-996–Gly-1006, Val-1007–Gly-1017, Val-1018–Gly-1028, Val-1029–Gly-1039, and Val-1040–Gly-1050. The segment at Met-919–Gly-1039 is 12 X 11 AA tandem repeats of [MV]-G-I-P-P-P-P-P-L-P-G. Pro residues predominate over residues Leu-1037–Gly-1097. Positions Leu-1037–Thr-1108 are disordered. Residues Arg-1139–Lys-1554 enclose the FH2 domain. The stretch at Gln-1419–Gln-1455 forms a coiled coil. The important for interaction with SPIRE1 stretch occupies residues Lys-1571–Thr-1578.

Belongs to the formin homology family. Cappuccino subfamily. In terms of assembly, interacts with SPIRE1. Binds actin. Interacts with CDKN1A. As to expression, detected in brain and in oocytes (at protein level). Expressed almost exclusively in the developing and mature central nervous system. Detected in oocytes.

It localises to the cytoplasm. The protein resides in the cytoskeleton. It is found in the cytosol. The protein localises to the perinuclear region. Its subcellular location is the nucleus. It localises to the nucleolus. The protein resides in the cell membrane. It is found in the cell cortex. The protein localises to the cytoplasmic vesicle membrane. In terms of biological role, actin-binding protein that is involved in actin cytoskeleton assembly and reorganization. Acts as an actin nucleation factor and promotes assembly of actin filaments together with SPIRE1 and SPIRE2. Involved in intracellular vesicle transport along actin fibers, providing a novel link between actin cytoskeleton dynamics and intracellular transport. Required for asymmetric spindle positioning, asymmetric oocyte division and polar body extrusion during female germ cell meiosis. Plays a role in responses to DNA damage, cellular stress and hypoxia by protecting CDKN1A against degradation, and thereby plays a role in stress-induced cell cycle arrest. Also acts in the nucleus: together with SPIRE1 and SPIRE2, promotes assembly of nuclear actin filaments in response to DNA damage in order to facilitate movement of chromatin and repair factors after DNA damage. Protects cells against apoptosis by protecting CDKN1A against degradation. This Mus musculus (Mouse) protein is Formin-2 (Fmn2).